The chain runs to 258 residues: Octanoyltransferase (258 aa).

The BPL/LPL catalytic domain maps to 42-226; the sequence is NVGTDTLLLL…AVVAALDGEL (185 aa). Residues 80–87, 156–158, and 169–171 each bind substrate; these read RGGKITWH, AIG, and GFS. Cys-187 (acyl-thioester intermediate) is an active-site residue.

Belongs to the LipB family.

It is found in the cytoplasm. The enzyme catalyses octanoyl-[ACP] + L-lysyl-[protein] = N(6)-octanoyl-L-lysyl-[protein] + holo-[ACP] + H(+). Its pathway is protein modification; protein lipoylation via endogenous pathway; protein N(6)-(lipoyl)lysine from octanoyl-[acyl-carrier-protein]: step 1/2. Functionally, catalyzes the transfer of endogenously produced octanoic acid from octanoyl-acyl-carrier-protein onto the lipoyl domains of lipoate-dependent enzymes. Lipoyl-ACP can also act as a substrate although octanoyl-ACP is likely to be the physiological substrate. The sequence is that of Octanoyltransferase from Rhodococcus jostii (strain RHA1).